The chain runs to 371 residues: Queuine tRNA-ribosyltransferase (371 aa).

Catalysis depends on aspartate 90, which acts as the Proton acceptor. Substrate-binding positions include 90-94 (DSGGF), aspartate 144, glutamine 188, and glycine 215. Residues 246–252 (GVGTPED) are RNA binding. Catalysis depends on aspartate 265, which acts as the Nucleophile. Residues 270 to 274 (TRNAR) form an RNA binding; important for wobble base 34 recognition region. Zn(2+) is bound by residues cysteine 303, cysteine 305, cysteine 308, and histidine 334.

Belongs to the queuine tRNA-ribosyltransferase family. Homodimer. Within each dimer, one monomer is responsible for RNA recognition and catalysis, while the other monomer binds to the replacement base PreQ1. Zn(2+) serves as cofactor.

It catalyses the reaction 7-aminomethyl-7-carbaguanine + guanosine(34) in tRNA = 7-aminomethyl-7-carbaguanosine(34) in tRNA + guanine. Its pathway is tRNA modification; tRNA-queuosine biosynthesis. Functionally, catalyzes the base-exchange of a guanine (G) residue with the queuine precursor 7-aminomethyl-7-deazaguanine (PreQ1) at position 34 (anticodon wobble position) in tRNAs with GU(N) anticodons (tRNA-Asp, -Asn, -His and -Tyr). Catalysis occurs through a double-displacement mechanism. The nucleophile active site attacks the C1' of nucleotide 34 to detach the guanine base from the RNA, forming a covalent enzyme-RNA intermediate. The proton acceptor active site deprotonates the incoming PreQ1, allowing a nucleophilic attack on the C1' of the ribose to form the product. After dissociation, two additional enzymatic reactions on the tRNA convert PreQ1 to queuine (Q), resulting in the hypermodified nucleoside queuosine (7-(((4,5-cis-dihydroxy-2-cyclopenten-1-yl)amino)methyl)-7-deazaguanosine). The chain is Queuine tRNA-ribosyltransferase from Neisseria gonorrhoeae (strain ATCC 700825 / FA 1090).